Reading from the N-terminus, the 121-residue chain is Small ribosomal subunit protein bS16 (121 aa).

Basic and acidic residues predominate over residues 97-114; that stretch reads LAKAKTKDGDNDSSKAES. Positions 97–121 are disordered; sequence LAKAKTKDGDNDSSKAESESNEAET.

The protein belongs to the bacterial ribosomal protein bS16 family.

The polypeptide is Small ribosomal subunit protein bS16 (Prochlorococcus marinus (strain MIT 9301)).